Here is a 428-residue protein sequence, read N- to C-terminus: UDP-N-acetylglucosamine 1-carboxyvinyltransferase 2 (428 aa).

22 to 23 (KN) lines the phosphoenolpyruvate pocket. Arg92 lines the UDP-N-acetyl-alpha-D-glucosamine pocket. Cys116 (proton donor) is an active-site residue. Residue Cys116 is modified to 2-(S-cysteinyl)pyruvic acid O-phosphothioketal. UDP-N-acetyl-alpha-D-glucosamine-binding positions include 121-125 (RPIDQ), Asp304, and Ile326.

It belongs to the EPSP synthase family. MurA subfamily.

Its subcellular location is the cytoplasm. It carries out the reaction phosphoenolpyruvate + UDP-N-acetyl-alpha-D-glucosamine = UDP-N-acetyl-3-O-(1-carboxyvinyl)-alpha-D-glucosamine + phosphate. It functions in the pathway cell wall biogenesis; peptidoglycan biosynthesis. Cell wall formation. Adds enolpyruvyl to UDP-N-acetylglucosamine. The polypeptide is UDP-N-acetylglucosamine 1-carboxyvinyltransferase 2 (Shouchella clausii (strain KSM-K16) (Alkalihalobacillus clausii)).